A 257-amino-acid chain; its full sequence is uncharacterized protein (257 aa).

A helical membrane pass occupies residues 7–27 (LMLGICLVLLIILIVGYVIMT).

The protein belongs to the staphylococcal tandem lipoprotein family.

It localises to the cell membrane. This is an uncharacterized protein from Staphylococcus aureus (strain Mu50 / ATCC 700699).